The primary structure comprises 381 residues: tRNA-cytidine(32) 2-sulfurtransferase (381 aa).

The PP-loop motif signature appears at 101-106 (SGGKDS). [4Fe-4S] cluster is bound by residues C176, C179, and C267.

It belongs to the TtcA family. As to quaternary structure, homodimer. Mg(2+) is required as a cofactor. [4Fe-4S] cluster serves as cofactor.

It localises to the cytoplasm. It catalyses the reaction cytidine(32) in tRNA + S-sulfanyl-L-cysteinyl-[cysteine desulfurase] + AH2 + ATP = 2-thiocytidine(32) in tRNA + L-cysteinyl-[cysteine desulfurase] + A + AMP + diphosphate + H(+). Its pathway is tRNA modification. Functionally, catalyzes the ATP-dependent 2-thiolation of cytidine in position 32 of tRNA, to form 2-thiocytidine (s(2)C32). The sulfur atoms are provided by the cysteine/cysteine desulfurase (IscS) system. The chain is tRNA-cytidine(32) 2-sulfurtransferase from Psychrobacter arcticus (strain DSM 17307 / VKM B-2377 / 273-4).